The following is an 83-amino-acid chain: Protein FAM240A (83 aa).

The protein belongs to the FAM240 family.

In Homo sapiens (Human), this protein is Protein FAM240A.